The following is a 576-amino-acid chain: MARTTFLVSVSLFVSAVLARTVEYGLKISDGEIAPDGVKRNATLVNGGYPGPLIFANKGDTLKVKVQNKLTNPEMYRTTSIHWHGLLQHRNADDDGPSFVTQCPIVPRESYTYTIPLDDQTGTYWYHSHLSSQYVDGLRGPLVIYDPKDPHRRLYDVDDEKTVLIIGDWYHESSKAILASGNITRQRPVSATINGKGRFDPDNTPANPDTLYTLKVKRGKRYRLRVINSSEIASFRFSVEGHKVTVIAADGVSTKPYQVDAFDILAGQRIDCVVEANQEPDTYWINAPLTNVPNKTAQALLVYEEDRRPYHPPKGPYRKWSVSEAIIKYWNHKHKHGRGLLSGHGGLKARMIEGSHHLHSRSVVKRQNETTTVVMDESKLVPLEYPGAACGSKPADLVLDLTFGLNFATGHWMINGIPYESPKIPTLLKILTDEDGVTESDFTKEEHTVILPKNKCIEFNIKGNSGIPITHPVHLHGHTWDVVQFGNNPPNYVNPPRRDVVGSTDAGVRIQFKTDNPGPWFLHCHIDWHLEEGFAMVFAEAPEAVKGGPKSVAVDSQWEGLCGKYDNWLKSNPGQL.

A signal peptide spans 1–19 (MARTTFLVSVSLFVSAVLA). 2 Plastocyanin-like domains span residues 21–145 (TVEY…LVIY) and 157–304 (VDDE…LVYE). An N-linked (GlcNAc...) asparagine glycan is attached at Asn41. His82, His84, His127, and His129 together coordinate Cu cation. A disulfide bond links Cys103 and Cys562. 4 N-linked (GlcNAc...) asparagine glycosylation sites follow: Asn182, Asn228, Asn294, and Asn368. The 201-residue stretch at 376-576 (DESKLVPLEY…NWLKSNPGQL (201 aa)) folds into the Plastocyanin-like 3 domain. Positions 471, 474, 476, 523, 524, 525, and 529 each coordinate Cu cation.

Belongs to the multicopper oxidase family. As to quaternary structure, homodimer. Cu cation is required as a cofactor. In terms of tissue distribution, in mycelia, at a lower level than LCC4.

It is found in the secreted. The catalysed reaction is 4 hydroquinone + O2 = 4 benzosemiquinone + 2 H2O. Functionally, lignin degradation and detoxification of lignin-derived products. The protein is Laccase-1 (LCC1) of Thanatephorus cucumeris (Black scurf of potato).